The chain runs to 143 residues: Probable cyclic pyranopterin monophosphate synthase (143 aa).

Substrate is bound by residues 61 to 63 and 97 to 98; these read MCH and ME. The active site involves Asp112.

This sequence belongs to the MoaC family. Homohexamer; trimer of dimers.

It catalyses the reaction (8S)-3',8-cyclo-7,8-dihydroguanosine 5'-triphosphate = cyclic pyranopterin phosphate + diphosphate. The protein operates within cofactor biosynthesis; molybdopterin biosynthesis. In terms of biological role, catalyzes the conversion of (8S)-3',8-cyclo-7,8-dihydroguanosine 5'-triphosphate to cyclic pyranopterin monophosphate (cPMP). This Sulfolobus acidocaldarius (strain ATCC 33909 / DSM 639 / JCM 8929 / NBRC 15157 / NCIMB 11770) protein is Probable cyclic pyranopterin monophosphate synthase.